The sequence spans 119 residues: Large ribosomal subunit protein uL22 (119 aa).

Belongs to the universal ribosomal protein uL22 family. Part of the 50S ribosomal subunit.

This protein binds specifically to 23S rRNA; its binding is stimulated by other ribosomal proteins, e.g. L4, L17, and L20. It is important during the early stages of 50S assembly. It makes multiple contacts with different domains of the 23S rRNA in the assembled 50S subunit and ribosome. In terms of biological role, the globular domain of the protein is located near the polypeptide exit tunnel on the outside of the subunit, while an extended beta-hairpin is found that lines the wall of the exit tunnel in the center of the 70S ribosome. The chain is Large ribosomal subunit protein uL22 from Trichormus variabilis (strain ATCC 29413 / PCC 7937) (Anabaena variabilis).